Reading from the N-terminus, the 412-residue chain is Phytoene synthase 1, chloroplastic (412 aa).

A chloroplast-targeting transit peptide spans 1 to 129 (MSVALLWVVS…AYDRCGEVCA (129 aa)).

It belongs to the phytoene/squalene synthase family. As to quaternary structure, monomer. Interacts with SGR1.

Its subcellular location is the plastid. The protein resides in the chloroplast. It carries out the reaction 2 (2E,6E,10E)-geranylgeranyl diphosphate = 15-cis-phytoene + 2 diphosphate. It participates in carotenoid biosynthesis; phytoene biosynthesis; all-trans-phytoene from geranylgeranyl diphosphate: step 1/1. Its function is as follows. Catalyzes the reaction from prephytoene diphosphate to phytoene. The protein is Phytoene synthase 1, chloroplastic (PSY1) of Solanum lycopersicum (Tomato).